Here is a 113-residue protein sequence, read N- to C-terminus: Flagellar hook-basal body complex protein FliE (113 aa).

It belongs to the FliE family.

It localises to the bacterial flagellum basal body. In Rhizobium etli (strain ATCC 51251 / DSM 11541 / JCM 21823 / NBRC 15573 / CFN 42), this protein is Flagellar hook-basal body complex protein FliE.